Reading from the N-terminus, the 115-residue chain is DNA repair protein homolog YozK (115 aa).

The region spanning 12–115 (ILCVDMKSFY…EKCVHTYSID (104 aa)) is the UmuC domain. Residues Asp16 and Asp115 each coordinate Mg(2+).

It belongs to the DNA polymerase type-Y family. It depends on Mg(2+) as a cofactor.

This chain is DNA repair protein homolog YozK (yozK), found in Bacillus subtilis (strain 168).